A 470-amino-acid polypeptide reads, in one-letter code: Histidine--tRNA ligase (470 aa).

Residues 69-99 form a disordered region; sequence GIDPILPPNRQAEKDKSGETGKDKSGETGSE. Over residues 79 to 94 the composition is skewed to basic and acidic residues; sequence QAEKDKSGETGKDKSG.

This sequence belongs to the class-II aminoacyl-tRNA synthetase family. Homodimer.

Its subcellular location is the cytoplasm. It carries out the reaction tRNA(His) + L-histidine + ATP = L-histidyl-tRNA(His) + AMP + diphosphate + H(+). The polypeptide is Histidine--tRNA ligase (Nostoc punctiforme (strain ATCC 29133 / PCC 73102)).